A 476-amino-acid chain; its full sequence is Replication factor C large subunit (476 aa).

ATP is bound at residue 43–50 (GKPGIGKT). The tract at residues 435 to 476 (LEALRMQEPPVPETPPAAEEQPLEEPQEEKKLAPKQATLDFF) is disordered.

The protein belongs to the activator 1 small subunits family. RfcL subfamily. As to quaternary structure, heteromultimer composed of small subunits (RfcS) and large subunits (RfcL).

In terms of biological role, part of the RFC clamp loader complex which loads the PCNA sliding clamp onto DNA. The polypeptide is Replication factor C large subunit (Methanocorpusculum labreanum (strain ATCC 43576 / DSM 4855 / Z)).